The chain runs to 453 residues: MTLPVVAIVGRPNVGKSTLVNRLTGERVAIVHDQPGVTRDRTYRPSFWQDRDFLVVDTGGLVFADDTEFLPLIRQQVVTALSEARVAILVVDGQQGITAADEEIAQWLRQQSLPVLVAVNKCESPQQGLAQGAEFWELGLGEPFPISAIHGNGTGELLDQVVSYLPPTDQQAGEEDIINVAIVGRPNVGKSSLLNAVVGEQRAIVSPISGTTRDAIDTLVERDGQRYRLIDTAGIRKQKNVDYGPEFFGINRAFKAIQRAEVVLLVLDALDGVTEQDQKLAGRIVDEGCACVIVVNKWDAVEKDSYTIYDYQHQVEQRLNFIGWSDHIFISAATGQRVEKIFERVHLAAEQHRRRVSTSVINEVLEDAVGWHSPPASRQGRQGKIYYGTQVSSQPPTIALFVNDPALFKDNYRKYIEGQFRKQLGFRGTPIRLLWRGKKVREAERKGVLVRDR.

EngA-type G domains lie at 4–169 (PVVA…PPTD) and 178–353 (INVA…EQHR). Residues 10-17 (GRPNVGKS), 57-61 (DTGGL), 120-123 (NKCE), 184-191 (GRPNVGKS), 231-235 (DTAGI), and 296-299 (NKWD) each bind GTP. The 86-residue stretch at 354–439 (RRVSTSVINE…PIRLLWRGKK (86 aa)) folds into the KH-like domain.

It belongs to the TRAFAC class TrmE-Era-EngA-EngB-Septin-like GTPase superfamily. EngA (Der) GTPase family. As to quaternary structure, associates with the 50S ribosomal subunit.

In terms of biological role, GTPase that plays an essential role in the late steps of ribosome biogenesis. In Cyanothece sp. (strain PCC 7425 / ATCC 29141), this protein is GTPase Der.